Here is a 256-residue protein sequence, read N- to C-terminus: Short chain dehydrogenase adrF (256 aa).

The NADP(+) site is built by I11, D57, R119, Y151, K155, and V184. Y151 (proton acceptor) is an active-site residue. The Lowers pKa of active site Tyr role is filled by K155.

This sequence belongs to the short-chain dehydrogenases/reductases (SDR) family.

The protein operates within secondary metabolite biosynthesis; terpenoid biosynthesis. Its function is as follows. Short chain dehydrogenase; part of the gene cluster that mediates the biosynthesis of andrastins, meroterpenoid compounds that exhibit inhibitory activity against ras farnesyltransferase, suggesting that they could be promising leads for antitumor agents. The first step of the pathway is the synthesis of 3,5-dimethylorsellinic acid (DMOA) by the polyketide synthase adrD via condensation of one acetyl-CoA starter unit with 3 malonyl-CoA units and 2 methylations. DMAO is then converted to farnesyl-DMAO by the prenyltransferase adrG. The methyltransferase adrK catalyzes the methylation of the carboxyl group of farnesyl-DMAO to farnesyl-DMAO methyl ester which is further converted to epoxyfarnesyl-DMAO methyl ester by the FAD-dependent monooxygenase adrH. The terpene cyclase adrI then catalyzes the carbon skeletal rearrangement to generate the andrastin E, the first compound in the pathway having the andrastin scaffold, with the tetracyclic ring system. The post-cyclization tailoring enzymes adrF, adrE, adrJ, and adrA, are involved in the conversion of andrastin E into andrastin A. The short chain dehydrogenase adrF is responsible for the oxidation of the C-3 a hydroxyl group of andrastin E to yield the corresponding ketone, andrastin D. The ketoreductase adrE stereoselectively reduces the carbonyl moiety to reverse the stereochemistry of the C-3 position to yield andrastin F. The acetyltransferase adrJ is the acetyltransferase that attaches the acetyl group to the C-3 hydroxyl group of andrastin F to yield andrastin C. Finally, the cytochrome P450 monooxygenase adrA catalyzes two sequential oxidation reactions of the C-23 methyl group, to generate the corresponding alcohol andrastin B, and aldehyde andrastin A. This chain is Short chain dehydrogenase adrF, found in Penicillium roqueforti.